The sequence spans 263 residues: Hydroxyethylthiazole kinase (263 aa).

Met-41 contributes to the substrate binding site. ATP is bound by residues Arg-117 and Ser-163. Position 190 (Ala-190) interacts with substrate.

This sequence belongs to the Thz kinase family. Requires Mg(2+) as cofactor.

It catalyses the reaction 5-(2-hydroxyethyl)-4-methylthiazole + ATP = 4-methyl-5-(2-phosphooxyethyl)-thiazole + ADP + H(+). It participates in cofactor biosynthesis; thiamine diphosphate biosynthesis; 4-methyl-5-(2-phosphoethyl)-thiazole from 5-(2-hydroxyethyl)-4-methylthiazole: step 1/1. In terms of biological role, catalyzes the phosphorylation of the hydroxyl group of 4-methyl-5-beta-hydroxyethylthiazole (THZ). The sequence is that of Hydroxyethylthiazole kinase from Haemophilus influenzae (strain PittEE).